The chain runs to 268 residues: ClpXP adapter protein SpxH (268 aa).

It belongs to the SpxH family. Interacts with Spx.

The protein localises to the cytoplasm. Its function is as follows. Adapter protein required for efficient degradation of Spx by ClpXP under non-stress conditions. Interaction with Spx stabilizes Spx and exposes the C-terminus of Spx for recognition and proteolysis by ClpXP. This is ClpXP adapter protein SpxH from Staphylococcus aureus (strain Mu3 / ATCC 700698).